A 572-amino-acid polypeptide reads, in one-letter code: 2-succinyl-5-enolpyruvyl-6-hydroxy-3-cyclohexene-1-carboxylate synthase (572 aa).

Belongs to the TPP enzyme family. MenD subfamily. In terms of assembly, homodimer. Mg(2+) serves as cofactor. It depends on Mn(2+) as a cofactor. Requires thiamine diphosphate as cofactor.

It catalyses the reaction isochorismate + 2-oxoglutarate + H(+) = 5-enolpyruvoyl-6-hydroxy-2-succinyl-cyclohex-3-ene-1-carboxylate + CO2. It participates in quinol/quinone metabolism; 1,4-dihydroxy-2-naphthoate biosynthesis; 1,4-dihydroxy-2-naphthoate from chorismate: step 2/7. The protein operates within quinol/quinone metabolism; menaquinone biosynthesis. In terms of biological role, catalyzes the thiamine diphosphate-dependent decarboxylation of 2-oxoglutarate and the subsequent addition of the resulting succinic semialdehyde-thiamine pyrophosphate anion to isochorismate to yield 2-succinyl-5-enolpyruvyl-6-hydroxy-3-cyclohexene-1-carboxylate (SEPHCHC). In Aeromonas salmonicida (strain A449), this protein is 2-succinyl-5-enolpyruvyl-6-hydroxy-3-cyclohexene-1-carboxylate synthase.